A 181-amino-acid polypeptide reads, in one-letter code: Translationally-controlled tumor protein homolog (181 aa).

The region spanning 1–181 (MLIYKDIFTD…VKEAIIEEKC (181 aa)) is the TCTP domain.

Belongs to the TCTP family.

It is found in the cytoplasm. In terms of biological role, involved in calcium binding and microtubule stabilization. The protein is Translationally-controlled tumor protein homolog (tct-1) of Caenorhabditis elegans.